Reading from the N-terminus, the 233-residue chain is uncharacterized protein (233 aa).

It belongs to the asfivirus H233R family.

This is an uncharacterized protein from Ornithodoros (relapsing fever ticks).